The following is a 343-amino-acid chain: Lumican (343 aa).

Residues 1-18 form the signal peptide; sequence MTLNSLPIFLVLISGIFC. Residue glutamine 19 is modified to Pyrrolidone carboxylic acid. Tyrosine 20 and tyrosine 22 each carry sulfotyrosine. The LRRNT domain maps to 31–69; sequence DPFGPSTAVCAPECNCPLSYPTAMYCDNLKLKTIPIVPS. LRR repeat units lie at residues 70–91, 94–117, 120–140, 141–162, 165–186, 190–211, 212–232, and 235–255; these read GIKY…TFDN, DLQW…VFSK, NLKK…PLPK, TLDD…ALEG, NLTV…GAFK, SLLY…LPHS, LLML…YFQG, and TLQY…PGNV. N-linked (GlcNAc...) (keratan sulfate) asparagine glycosylation occurs at asparagine 91. Asparagine 130 carries N-linked (GlcNAc...) (keratan sulfate) asparagine glycosylation. N-linked (GlcNAc...) (keratan sulfate) asparagine glycosylation is present at asparagine 165. Asparagine 257 carries N-linked (GlcNAc...) (keratan sulfate) asparagine glycosylation. LRR repeat units lie at residues 260-281, 282-301, and 310-330; these read SLVE…SENL, ENFY…SFCK, and KITH…PQEM. Cysteines 300 and 333 form a disulfide. N-linked (GlcNAc...) asparagine glycosylation occurs at asparagine 320.

This sequence belongs to the small leucine-rich proteoglycan (SLRP) family. SLRP class II subfamily. As to quaternary structure, binds to laminin. Contains keratan sulfate. As to expression, cornea and other tissues.

The protein localises to the secreted. It localises to the extracellular space. The protein resides in the extracellular matrix. This is Lumican (LUM) from Gallus gallus (Chicken).